Consider the following 542-residue polypeptide: Chloride channel CLIC-like protein 1 (542 aa).

A signal peptide spans 1–18 (MLYSLLLCECLWLITAYA). Topologically, residues 19–184 (HDDEWIDPTD…EEFFGVDPYN (166 aa)) are lumenal. The helical transmembrane segment at 185 to 205 (VFMVLLCLLCIVALVATELWT) threads the bilayer. Residues 206–216 (YVRWYTQLKRV) lie on the Cytoplasmic side of the membrane. The helical transmembrane segment at 217 to 237 (FFISFLISLGWNWMYLYKLAF) threads the bilayer. Over 238–329 (AQHQAEVAKM…GEFIKALMKE (92 aa)) the chain is Lumenal. The helical transmembrane segment at 330–350 (IPVLLHIPVLIIMALAVLSFC) threads the bilayer. The Cytoplasmic portion of the chain corresponds to 351-542 (YGAGKSVNML…PASTAVEVCG (192 aa)). Residues 369–394 (EAPQALQAGERRRQQKIDYRPHGGAG) form a disordered region. The span at 377 to 389 (GERRRQQKIDYRP) shows a compositional bias: basic and acidic residues. Phosphoserine occurs at positions 438 and 464. Residues 452 to 542 (AREHPKVVPG…PASTAVEVCG (91 aa)) are disordered. The segment covering 480-491 (ESTPTESSTESS) has biased composition (low complexity). The residue at position 482 (Thr482) is a Phosphothreonine. The residue at position 532 (Ser532) is a Phosphoserine.

This sequence belongs to the chloride channel MCLC family. As to quaternary structure, homomultimers. Interacts with mitochondrial protein PIGBOS1 (via C-terminus); the interaction occurs at the mitochondria-associated endoplasmic reticulum (ER) membrane, a zone of contact between the ER and mitochondrial membranes, but does not appear to play a role in ER-mitochondria tethering and is not affected by ER stress. Interacts with CALR.

It localises to the endoplasmic reticulum membrane. It catalyses the reaction chloride(in) = chloride(out). The catalysed reaction is bromide(in) = bromide(out). The enzyme catalyses nitrate(in) = nitrate(out). It carries out the reaction fluoride(in) = fluoride(out). Anion-selective channel with Ca(2+)-dependent and voltage-independent gating. Permeable to small monovalent anions with selectivity for bromide &gt; chloride &gt; nitrate &gt; fluoride. Operates in the endoplasmic reticulum (ER) membrane where it mediates chloride efflux to compensate for the loss of positive charges from the ER lumen upon Ca(2+) release. Contributes to the maintenance of ER Ca(2+) pools and activation of unfolded protein response to prevent accumulation of misfolded proteins in the ER lumen. Particularly involved in ER homeostasis mechanisms underlying motor neurons and retinal photoreceptors survival. In Bos taurus (Bovine), this protein is Chloride channel CLIC-like protein 1 (CLCC1).